Reading from the N-terminus, the 112-residue chain is MVRATCLLASCVLFALLLIVPASAYPRYPSNYFREEGQYEPEEIMDMLNRLGNLIQMERKMENYKEDITSEKRALDLGLSRGYSGALQAKHLMGLAAANYAGGPGRRRRDAH.

The first 24 residues, 1-24 (MVRATCLLASCVLFALLLIVPASA), serve as a signal peptide directing secretion. The propeptide occupies 25–71 (YPRYPSNYFREEGQYEPEEIMDMLNRLGNLIQMERKMENYKEDITSE). The residue at position 104 (Pro-104) is a Proline amide. Positions 108–112 (RRDAH) are excised as a propeptide.

In terms of tissue distribution, expressed in corpora cardiaca (CC), corpora allata (CA), antennal lobe (AL) and gnathal ganglion (GNG) (at protein level). Expression in CC, CA and AL detected in most animals, expression in GNG in few animals (at protein level).

It localises to the secreted. In terms of biological role, regulation of fluid secretion. Stimulates Malpighian tubule fluid secretion. The polypeptide is Diuretic hormone class 2 (Agrotis ipsilon (Black cutworm moth)).